The sequence spans 328 residues: PDZ and LIM domain protein 1 (328 aa).

N-acetylthreonine is present on Thr2. Residues 3 to 85 (TLQIVLQGPG…NMTLTVARSE (83 aa)) form the PDZ domain. A phosphoserine mark is found at Ser90 and Ser130. A Phosphotyrosine modification is found at Tyr144. Residues 257–316 (PMCDKCGTGIVGVFVKLRERHRHPECYVCTDCGTNLKQKGHFFVEDQIYCEKHARERVTP) form the LIM zinc-binding domain. Positions 259, 262, 279, 282, 285, 288, 306, and 309 each coordinate Zn(2+). Thr315 carries the post-translational modification Phosphothreonine. At Tyr320 the chain carries Phosphotyrosine.

Interacts with ACTN1, ACTN2 and ACTN4. Interacts with PDLIM4.

It localises to the cytoplasm. Its subcellular location is the cytoskeleton. It is found in the myofibril. The protein resides in the sarcomere. The protein localises to the z line. Its function is as follows. Cytoskeletal protein that may act as an adapter that brings other proteins (like kinases) to the cytoskeleton. Involved in assembly, disassembly and directioning of stress fibers in fibroblasts. Required for the localization of ACTN1 and PALLD to stress fibers. Required for cell migration and in maintaining cell polarity of fibroblasts. The chain is PDZ and LIM domain protein 1 (PDLIM1) from Bos taurus (Bovine).